The sequence spans 498 residues: DEAD-box ATP-dependent RNA helicase 6 (498 aa).

The disordered stretch occupies residues 1-109 (MDPRARYPPG…WKAQLKLPPQ (109 aa)). The span at 33 to 49 (QHQHQHQQPPHPHHHQY) shows a compositional bias: basic residues. 2 stretches are compositionally biased toward low complexity: residues 50–61 (VQRQPQPQQTPH) and 75–86 (AAEAAGASEQKA). The Q motif motif lies at 124–152 (NEFEDYFLKRELLMGIYEKGFERPSPIQE). In terms of domain architecture, Helicase ATP-binding spans 155 to 325 (IPIALTGSDI…DKYLPKPYVI (171 aa)). 168–175 (AKNGTGKT) contacts ATP. Positions 273–276 (DEAD) match the DEAD box motif. The Helicase C-terminal domain maps to 335-495 (GITQFYAFVE…PIPPQIDRAI (161 aa)).

The protein belongs to the DEAD box helicase family. DDX6/DHH1 subfamily.

Its subcellular location is the cytoplasm. It localises to the P-body. It catalyses the reaction ATP + H2O = ADP + phosphate + H(+). In terms of biological role, ATP-dependent RNA helicase involved in mRNA turnover, and more specifically in mRNA decapping. This Oryza sativa subsp. japonica (Rice) protein is DEAD-box ATP-dependent RNA helicase 6.